Reading from the N-terminus, the 700-residue chain is Polyribonucleotide nucleotidyltransferase (700 aa).

Mg(2+)-binding residues include Asp-487 and Asp-493. A KH domain is found at 554-613; the sequence is PRLLTIKIHPDKIRDVIGKGGSTIQAITKDTGTQIDIQDDGTIVIASVNNAAAREAKRRI. The S1 motif domain maps to 623-691; the sequence is GRIYEGKVAK…KQGRIRLSIK (69 aa).

It belongs to the polyribonucleotide nucleotidyltransferase family. In terms of assembly, component of the RNA degradosome, which is a multiprotein complex involved in RNA processing and mRNA degradation. The cofactor is Mg(2+).

Its subcellular location is the cytoplasm. It catalyses the reaction RNA(n+1) + phosphate = RNA(n) + a ribonucleoside 5'-diphosphate. Its function is as follows. Involved in mRNA degradation. Catalyzes the phosphorolysis of single-stranded polyribonucleotides processively in the 3'- to 5'-direction. The sequence is that of Polyribonucleotide nucleotidyltransferase from Xylella fastidiosa (strain M12).